The chain runs to 461 residues: Adenosylmethionine-8-amino-7-oxononanoate aminotransferase (461 aa).

117–118 (GA) contributes to the pyridoxal 5'-phosphate binding site. Tyr-150 serves as a coordination point for substrate. A pyridoxal 5'-phosphate-binding site is contributed by Asp-263. Residues Lys-296, Gly-331, and Arg-426 each coordinate substrate. At Lys-296 the chain carries N6-(pyridoxal phosphate)lysine.

It belongs to the class-III pyridoxal-phosphate-dependent aminotransferase family. BioA subfamily. In terms of assembly, homodimer. Requires pyridoxal 5'-phosphate as cofactor.

The protein resides in the cytoplasm. It carries out the reaction (8S)-8-amino-7-oxononanoate + S-adenosyl-L-methionine = S-adenosyl-4-methylsulfanyl-2-oxobutanoate + (7R,8S)-7,8-diammoniononanoate. The protein operates within cofactor biosynthesis; biotin biosynthesis; 7,8-diaminononanoate from 8-amino-7-oxononanoate (SAM route): step 1/1. Catalyzes the transfer of the alpha-amino group from S-adenosyl-L-methionine (SAM) to 7-keto-8-aminopelargonic acid (KAPA) to form 7,8-diaminopelargonic acid (DAPA). It is the only aminotransferase known to utilize SAM as an amino donor. The protein is Adenosylmethionine-8-amino-7-oxononanoate aminotransferase of Methanocaldococcus jannaschii (strain ATCC 43067 / DSM 2661 / JAL-1 / JCM 10045 / NBRC 100440) (Methanococcus jannaschii).